We begin with the raw amino-acid sequence, 608 residues long: UvrABC system protein C (608 aa).

Positions 22–100 constitute a GIY-YIG domain; the sequence is EKPGIYQYLN…IKKYKPRYNV (79 aa). In terms of domain architecture, UVR spans 214 to 249; the sequence is QEISRLLYQRMQDLAAEMKFEEAQKVKEKYALIENY.

This sequence belongs to the UvrC family. Interacts with UvrB in an incision complex.

It is found in the cytoplasm. Functionally, the UvrABC repair system catalyzes the recognition and processing of DNA lesions. UvrC both incises the 5' and 3' sides of the lesion. The N-terminal half is responsible for the 3' incision and the C-terminal half is responsible for the 5' incision. The protein is UvrABC system protein C of Bacteroides fragilis (strain ATCC 25285 / DSM 2151 / CCUG 4856 / JCM 11019 / LMG 10263 / NCTC 9343 / Onslow / VPI 2553 / EN-2).